Consider the following 365-residue polypeptide: UDP-N-acetylglucosamine--N-acetylmuramyl-(pentapeptide) pyrophosphoryl-undecaprenol N-acetylglucosamine transferase (365 aa).

Residues 11–13 (TGG), N124, R165, S192, I246, and Q291 each bind UDP-N-acetyl-alpha-D-glucosamine.

The protein belongs to the glycosyltransferase 28 family. MurG subfamily.

The protein localises to the cell inner membrane. The catalysed reaction is di-trans,octa-cis-undecaprenyl diphospho-N-acetyl-alpha-D-muramoyl-L-alanyl-D-glutamyl-meso-2,6-diaminopimeloyl-D-alanyl-D-alanine + UDP-N-acetyl-alpha-D-glucosamine = di-trans,octa-cis-undecaprenyl diphospho-[N-acetyl-alpha-D-glucosaminyl-(1-&gt;4)]-N-acetyl-alpha-D-muramoyl-L-alanyl-D-glutamyl-meso-2,6-diaminopimeloyl-D-alanyl-D-alanine + UDP + H(+). It functions in the pathway cell wall biogenesis; peptidoglycan biosynthesis. In terms of biological role, cell wall formation. Catalyzes the transfer of a GlcNAc subunit on undecaprenyl-pyrophosphoryl-MurNAc-pentapeptide (lipid intermediate I) to form undecaprenyl-pyrophosphoryl-MurNAc-(pentapeptide)GlcNAc (lipid intermediate II). The sequence is that of UDP-N-acetylglucosamine--N-acetylmuramyl-(pentapeptide) pyrophosphoryl-undecaprenol N-acetylglucosamine transferase from Nitratidesulfovibrio vulgaris (strain ATCC 29579 / DSM 644 / CCUG 34227 / NCIMB 8303 / VKM B-1760 / Hildenborough) (Desulfovibrio vulgaris).